Here is a 401-residue protein sequence, read N- to C-terminus: Argininosuccinate synthase (401 aa).

9–17 (AYSGGLDTS) is a binding site for ATP. Tyr86 lines the L-citrulline pocket. Position 116 (Gly116) interacts with ATP. Positions 118, 122, and 123 each coordinate L-aspartate. Residue Asn122 participates in L-citrulline binding. L-citrulline is bound by residues Arg126, Ser174, Ser183, Glu259, and Tyr271.

It belongs to the argininosuccinate synthase family. Type 1 subfamily. In terms of assembly, homotetramer.

It localises to the cytoplasm. The catalysed reaction is L-citrulline + L-aspartate + ATP = 2-(N(omega)-L-arginino)succinate + AMP + diphosphate + H(+). The protein operates within amino-acid biosynthesis; L-arginine biosynthesis; L-arginine from L-ornithine and carbamoyl phosphate: step 2/3. This Bacillus cereus (strain AH820) protein is Argininosuccinate synthase.